Here is a 711-residue protein sequence, read N- to C-terminus: Choline transporter-like protein 2 (711 aa).

Topologically, residues 1 to 33 (MGDERPHYYGKHGTPQKYDPTFKGPIYNRGCTD) are cytoplasmic. Phosphothreonine is present on T14. The chain crosses the membrane as a helical span at residues 34 to 54 (VICCVFLLVAIVGYVAVGIIA). Topologically, residues 55-232 (WTHGDPRKVI…RIFEDYTVSW (178 aa)) are extracellular. N187 and N200 each carry an N-linked (GlcNAc...) asparagine glycan. Residues 233 to 253 (YWIIIGLVIAMAMSLLFIILL) traverse the membrane as a helical segment. Residues 254–256 (RFL) are Cytoplasmic-facing. Residues 257-277 (AGIMVWVMIIMVILVLGYGIF) traverse the membrane as a helical segment. Topologically, residues 278 to 315 (HCYMEYSRLRGEAGSDVSLVDLGFQTDFRVYLHLRQTW) are extracellular. The chain crosses the membrane as a helical span at residues 316–336 (LAFMIILSILEVIIILLLIFL). Topologically, residues 337–364 (RKRILIAIALIKEASRAVGYVMCTMLYP) are cytoplasmic. Residues 365-385 (LVTFFLLCLCIAYWASTAVFL) traverse the membrane as a helical segment. Topologically, residues 386–440 (STSNEAVYKIFDDGLCPFTAKTCNPETFPSSNESRQCPNARCQFAFYGGESGYHR) are extracellular. A glycan (N-linked (GlcNAc...) asparagine) is linked at N417. A helical transmembrane segment spans residues 441-461 (ALLGLQIFNAFMFFWLANFVL). Topologically, residues 462 to 504 (ALGQVTLAGAFASYYWALRKPDDLPAFPLFSAFGRALRYHTGS) are cytoplasmic. Residues 505 to 525 (LAFGALILAIVQIIRVILEYL) form a helical membrane-spanning segment. Residues 526 to 563 (DQRLKAAENKFAKCLMTCLKCCFWCLEKFIKFLNRNAY) are Extracellular-facing. A helical membrane pass occupies residues 564-584 (IMIAIYGTNFCTSARNAFFLL). The Cytoplasmic portion of the chain corresponds to 585–599 (MRNIIRVAVLDKVTD). A helical transmembrane segment spans residues 600–620 (FLFLLGKLLIVGSVGILAFFF). Residues 621-638 (FTHRIRIVQDTAPPLNYY) are Extracellular-facing. Residues 639 to 659 (WVPILTVIVGSYLIAHGFFSV) form a helical membrane-spanning segment. Residues 660-711 (YGMCVDTLFLCFCEDLERNDGSQERPYFMSPELRDILLKGSAEEGKRAEAEE) are Cytoplasmic-facing.

It belongs to the CTL (choline transporter-like) family. As to quaternary structure, interacts with COCH. Post-translationally, N-glycosylated.

The protein resides in the cell membrane. Its subcellular location is the mitochondrion outer membrane. It carries out the reaction choline(out) + n H(+)(in) = choline(in) + n H(+)(out). The catalysed reaction is ethanolamine(out) + n H(+)(in) = ethanolamine(in) + n H(+)(out). In terms of biological role, choline/H+ antiporter, mainly in mitochodria. Also acts as a low-affinity ethanolamine/H+ antiporter, regulating the supply of extracellular ethanolamine (Etn) for the CDP-Etn pathway, redistribute intracellular Etn and balance the CDP-Cho and CDP-Etn arms of the Kennedy pathway. The polypeptide is Choline transporter-like protein 2 (SLC44A2) (Pongo abelii (Sumatran orangutan)).